The primary structure comprises 114 residues: MGCRLLCCAVLCLLGAVPMETGVTQTPRHLVMGMTNKKSLKCEQHLGHNAMYWYKQSAKKPLELMFVYSLEERVENNSVPSRFSPECPNSSHLFLHLHTLQPEDSALYLCASSQ.

Residues 1 to 21 form the signal peptide; that stretch reads MGCRLLCCAVLCLLGAVPMET. The 93-residue stretch at 22–114 folds into the Ig-like domain; the sequence is GVTQTPRHLV…SALYLCASSQ (93 aa). A disulfide bridge connects residues Cys-42 and Cys-110. Residues Asn-76 and Asn-89 are each glycosylated (N-linked (GlcNAc...) asparagine).

As to quaternary structure, alpha-beta TR is a heterodimer composed of an alpha and beta chain; disulfide-linked. The alpha-beta TR is associated with the transmembrane signaling CD3 coreceptor proteins to form the TR-CD3 (TcR or TCR). The assembly of alpha-beta TR heterodimers with CD3 occurs in the endoplasmic reticulum where a single alpha-beta TR heterodimer associates with one CD3D-CD3E heterodimer, one CD3G-CD3E heterodimer and one CD247 homodimer forming a stable octameric structure. CD3D-CD3E and CD3G-CD3E heterodimers preferentially associate with TR alpha and TR beta chains, respectively. The association of the CD247 homodimer is the last step of TcR assembly in the endoplasmic reticulum and is required for transport to the cell surface.

It localises to the cell membrane. Its function is as follows. V region of the variable domain of T cell receptor (TR) beta chain that participates in the antigen recognition. Alpha-beta T cell receptors are antigen specific receptors which are essential to the immune response and are present on the cell surface of T lymphocytes. Recognize peptide-major histocompatibility (MH) (pMH) complexes that are displayed by antigen presenting cells (APC), a prerequisite for efficient T cell adaptive immunity against pathogens. Binding of alpha-beta TR to pMH complex initiates TR-CD3 clustering on the cell surface and intracellular activation of LCK that phosphorylates the ITAM motifs of CD3G, CD3D, CD3E and CD247 enabling the recruitment of ZAP70. In turn ZAP70 phosphorylates LAT, which recruits numerous signaling molecules to form the LAT signalosome. The LAT signalosome propagates signal branching to three major signaling pathways, the calcium, the mitogen-activated protein kinase (MAPK) kinase and the nuclear factor NF-kappa-B (NF-kB) pathways, leading to the mobilization of transcription factors that are critical for gene expression and essential for T cell growth and differentiation. The T cell repertoire is generated in the thymus, by V-(D)-J rearrangement. This repertoire is then shaped by intrathymic selection events to generate a peripheral T cell pool of self-MH restricted, non-autoaggressive T cells. Post-thymic interaction of alpha-beta TR with the pMH complexes shapes TR structural and functional avidity. The sequence is that of T cell receptor beta variable 4-3 from Homo sapiens (Human).